The sequence spans 507 residues: Glucose transporter type 3 (507 aa).

A disordered region spans residues 1–26 (MRKGGIQDAEPVEPPQSSRKSGTWFA). Over 1 to 53 (MRKGGIQDAEPVEPPQSSRKSGTWFAKRPSEMPERHVERAPVRQKINNVGLYK) the chain is Cytoplasmic. A helical membrane pass occupies residues 54-74 (ATLYSNIGSFFFGIAVGWSGT). Over 75-95 (AERSVMEQHSYSFQPTELQWS) the chain is Extracellular. Residues 96 to 116 (GVCILLTLGAALWCLPMGLMV) traverse the membrane as a helical segment. The Cytoplasmic segment spans residues 117 to 124 (RLLGCRRT). Residues 125-145 (ILIQLLPNFLGWFLTVFARSV) traverse the membrane as a helical segment. Residues 146 to 152 (PMLYAGR) are Extracellular-facing. A helical membrane pass occupies residues 153-173 (FFLGMCGGAHCVVVPIYNAEI). At 174–183 (STTKKRGAMG) the chain is on the cytoplasmic side. The chain crosses the membrane as a helical span at residues 184–204 (VVFEGACICGVIYSFAMSLFL). The Extracellular segment spans residues 205 to 207 (ELR). A helical transmembrane segment spans residues 208 to 228 (IINFVNLGLLALGPLQILMPE). Residues 229 to 293 (SPAYYVDHGN…YKKVRRSLAR (65 aa)) are Cytoplasmic-facing. Residues 294-314 (SLAIALLQKLCGALIFIFYGL) traverse the membrane as a helical segment. At 315–324 (NMLDCLRIRR) the chain is on the extracellular side. The helical transmembrane segment at 325-345 (EFGLILCLGLILGFLACFFLV) threads the bilayer. Residues 346–351 (DRLGRR) lie on the Cytoplasmic side of the membrane. Residues 352–372 (PLLIFSSAGIVFVSIYLGLHF) form a helical membrane-spanning segment. At 373 to 374 (KV) the chain is on the extracellular side. A helical transmembrane segment spans residues 375–395 (WMTMGLTVMSWIALFCIAIFV). Residues 396 to 420 (GCYTAGVGSLTWVLNAELLVRPMRP) lie on the Cytoplasmic side of the membrane. The chain crosses the membrane as a helical span at residues 421–441 (LGCSIVCAFNWLTAFFVICWF). The Extracellular segment spans residues 442–450 (GSHGVKCQP). The chain crosses the membrane as a helical span at residues 451–471 (YLFLLFAIIASLILLFSLIYI). Residues 472–507 (PETKKLSSAKIQQRLGGLINRPAVITFTSSSDSSNA) are Cytoplasmic-facing.

This sequence belongs to the major facilitator superfamily. Sugar transporter (TC 2.A.1.1) family. Glucose transporter subfamily.

The protein resides in the cell membrane. The protein localises to the perikaryon. Its subcellular location is the cell projection. Facilitative glucose transporter that can also mediate the uptake of various other monosaccharides across the cell membrane. This is Glucose transporter type 3 (Glut3) from Drosophila melanogaster (Fruit fly).